The sequence spans 804 residues: General transcription and DNA repair factor IIH helicase/translocase subunit XPB (804 aa).

Disordered stretches follow at residues M1 to E61 and Q220 to S255. A compositionally biased stretch (acidic residues) spans P14 to D36. Low complexity-rich tracts occupy residues N47–N60 and Q220–P229. Over residues E236–S255 the composition is skewed to basic and acidic residues. The Helicase ATP-binding domain maps to M335 to M497. L348–T355 contributes to the ATP binding site. Positions D450–H453 match the DEVH box motif. The Helicase C-terminal domain occupies Q551–E705. Disordered stretches follow at residues D736 to S761 and K782 to R804. The span at L784–A793 shows a compositional bias: basic and acidic residues. Residues L794 to R804 are compositionally biased toward basic residues.

This sequence belongs to the helicase family. RAD25/XPB subfamily. Component of the 7-subunit TFIIH core complex composed of XPB/ptr8, XPD/rad15, ssl1, tfb1, tfb2, tfb4 and tfb5, which is active in NER. The core complex associates with the 3-subunit CTD-kinase module TFIIK composed of mcs2/cyclin H, mcs6/cdk7 and pmh1/tfb3 to form the 10-subunit holoenzyme (holo-TFIIH) active in transcription.

It is found in the nucleus. It catalyses the reaction Couples ATP hydrolysis with the unwinding of duplex DNA by translocating in the 3'-5' direction.. It carries out the reaction ATP + H2O = ADP + phosphate + H(+). In terms of biological role, probable ATP-dependent 3'-5' DNA helicase/translocase. Binds dsDNA rather than ssDNA, unzipping it in a translocase rather than classical helicase activity. Component of the general transcription and DNA repair factor IIH (TFIIH) core complex. When complexed to CDK-activating kinase (CAK), involved in RNA transcription by RNA polymerase II. Also involved in transcription-coupled nucleotide excision repair (NER) of damaged DNA. In NER, TFIIH acts by opening DNA around the lesion to allow the excision of the damaged oligonucleotide and its replacement by a new DNA fragment. The ATPase activity of XPB/ptr8, but not its helicase activity, is required for DNA opening. In transcription, TFIIH has an essential role in transcription initiation. When the pre-initiation complex (PIC) has been established, TFIIH is required for promoter opening and promoter escape. The ATP-dependent helicase activity of XPB/ptr8 is required for promoter escape but not for promoter opening. Plays a role in mRNA export. This Schizosaccharomyces pombe (strain 972 / ATCC 24843) (Fission yeast) protein is General transcription and DNA repair factor IIH helicase/translocase subunit XPB.